A 179-amino-acid polypeptide reads, in one-letter code: Endoribonuclease YbeY (179 aa).

The Zn(2+) site is built by His-141, His-145, and His-151.

This sequence belongs to the endoribonuclease YbeY family. It depends on Zn(2+) as a cofactor.

Its subcellular location is the cytoplasm. Single strand-specific metallo-endoribonuclease involved in late-stage 70S ribosome quality control and in maturation of the 3' terminus of the 16S rRNA. This chain is Endoribonuclease YbeY, found in Synechocystis sp. (strain ATCC 27184 / PCC 6803 / Kazusa).